The primary structure comprises 221 residues: UPF0758 protein Ent638_0101 (221 aa).

Residues 99-221 form the MPN domain; it reads PLLSPEMTKD…YVSFAEQGWI (123 aa). Positions 170, 172, and 183 each coordinate Zn(2+). Positions 170-183 match the JAMM motif motif; it reads HNHPSGCAEPSKAD.

This sequence belongs to the UPF0758 family. YicR subfamily.

In Enterobacter sp. (strain 638), this protein is UPF0758 protein Ent638_0101.